The chain runs to 210 residues: PRCYRYCKNKPYPKSRFCRGVPDPKIRIFDLGRKKAKVDEFPLCGHMVSDEYEQLSSEALEAARICANKYMVKSCGKDGFHIRVRLHPFHVIRINKMLSCAGADRLQTGMRGAFGKPQGTVARVHMGQVIMSIRTKAQNKEHVVEALRRAKFKFPGRQKIHISKKWGFTKFNADAFEEMVAQKRLIPDGCGVKYVPGRGPLDRWRALHAA.

The protein belongs to the universal ribosomal protein uL16 family. As to quaternary structure, component of the large ribosomal subunit. Mature ribosomes consist of a small (40S) and a large (60S) subunit. The 40S subunit contains about 33 different proteins and 1 molecule of RNA (18S). The 60S subunit contains about 49 different proteins and 3 molecules of RNA (28S, 5.8S and 5S).

The protein localises to the cytoplasm. In terms of biological role, component of the large ribosomal subunit. Plays a role in the formation of actively translating ribosomes. (Microbial infection) Seems to bind to the leucine zipper of viral and cellular JUN. This Gallus gallus (Chicken) protein is Large ribosomal subunit protein uL16.